The primary structure comprises 154 residues: Redox-sensitive transcriptional activator SoxR (154 aa).

The 69-residue stretch at 11 to 79 (LLTPGEVAKR…LATIGEAFGV (69 aa)) folds into the HTH merR-type domain. Positions 14-33 (PGEVAKRSGVAVSALHFYES) form a DNA-binding region, H-T-H motif. The [2Fe-2S] cluster site is built by Cys-119, Cys-122, Cys-124, and Cys-130. Residues 119–130 (CIGCGCLSRSDC) form a might be part of a sensor region region. The disordered stretch occupies residues 135–154 (PGDRLGEEGTGARLLEDEQN).

Homodimer.

In terms of biological role, activates the transcription of the soxS gene which itself controls the superoxide response regulon. SoxR contains a 2Fe-2S iron-sulfur cluster that may act as a redox sensor system that recognizes superoxide. The variable redox state of the Fe-S cluster is employed in vivo to modulate the transcriptional activity of SoxR in response to specific types of oxidative stress. Upon reduction of 2Fe-2S cluster, SoxR reversibly loses its transcriptional activity, but retains its DNA binding affinity. This Escherichia coli O157:H7 protein is Redox-sensitive transcriptional activator SoxR (soxR).